A 337-amino-acid chain; its full sequence is 4-hydroxy-3-methylbut-2-enyl diphosphate reductase (337 aa).

[4Fe-4S] cluster is bound at residue C38. Residues H67 and H100 each coordinate (2E)-4-hydroxy-3-methylbut-2-enyl diphosphate. Positions 67 and 100 each coordinate dimethylallyl diphosphate. The isopentenyl diphosphate site is built by H67 and H100. C122 contributes to the [4Fe-4S] cluster binding site. H150 is a (2E)-4-hydroxy-3-methylbut-2-enyl diphosphate binding site. H150 is a binding site for dimethylallyl diphosphate. H150 lines the isopentenyl diphosphate pocket. The Proton donor role is filled by E152. T190 contributes to the (2E)-4-hydroxy-3-methylbut-2-enyl diphosphate binding site. A [4Fe-4S] cluster-binding site is contributed by C220. The (2E)-4-hydroxy-3-methylbut-2-enyl diphosphate site is built by S248, S249, N250, and S293. Dimethylallyl diphosphate contacts are provided by S248, S249, N250, and S293. 4 residues coordinate isopentenyl diphosphate: S248, S249, N250, and S293.

The protein belongs to the IspH family. [4Fe-4S] cluster is required as a cofactor.

It carries out the reaction isopentenyl diphosphate + 2 oxidized [2Fe-2S]-[ferredoxin] + H2O = (2E)-4-hydroxy-3-methylbut-2-enyl diphosphate + 2 reduced [2Fe-2S]-[ferredoxin] + 2 H(+). It catalyses the reaction dimethylallyl diphosphate + 2 oxidized [2Fe-2S]-[ferredoxin] + H2O = (2E)-4-hydroxy-3-methylbut-2-enyl diphosphate + 2 reduced [2Fe-2S]-[ferredoxin] + 2 H(+). It participates in isoprenoid biosynthesis; dimethylallyl diphosphate biosynthesis; dimethylallyl diphosphate from (2E)-4-hydroxy-3-methylbutenyl diphosphate: step 1/1. Its pathway is isoprenoid biosynthesis; isopentenyl diphosphate biosynthesis via DXP pathway; isopentenyl diphosphate from 1-deoxy-D-xylulose 5-phosphate: step 6/6. Its function is as follows. Catalyzes the conversion of 1-hydroxy-2-methyl-2-(E)-butenyl 4-diphosphate (HMBPP) into a mixture of isopentenyl diphosphate (IPP) and dimethylallyl diphosphate (DMAPP). Acts in the terminal step of the DOXP/MEP pathway for isoprenoid precursor biosynthesis. This Mycolicibacterium vanbaalenii (strain DSM 7251 / JCM 13017 / BCRC 16820 / KCTC 9966 / NRRL B-24157 / PYR-1) (Mycobacterium vanbaalenii) protein is 4-hydroxy-3-methylbut-2-enyl diphosphate reductase.